A 403-amino-acid polypeptide reads, in one-letter code: Enoyl-[acyl-carrier-protein] reductase [NADH] (403 aa).

NAD(+)-binding positions include 49 to 54 (GASSGY), 75 to 76 (FE), 112 to 113 (DA), and 141 to 142 (LA). Tyr-227 is a binding site for substrate. The active-site Proton donor is Tyr-237. NAD(+) is bound by residues Lys-246 and 276 to 278 (VVT).

Belongs to the TER reductase family. In terms of assembly, monomer.

It catalyses the reaction a 2,3-saturated acyl-[ACP] + NAD(+) = a (2E)-enoyl-[ACP] + NADH + H(+). Its pathway is lipid metabolism; fatty acid biosynthesis. Involved in the final reduction of the elongation cycle of fatty acid synthesis (FAS II). Catalyzes the reduction of a carbon-carbon double bond in an enoyl moiety that is covalently linked to an acyl carrier protein (ACP). This Pseudomonas putida (strain GB-1) protein is Enoyl-[acyl-carrier-protein] reductase [NADH].